The sequence spans 183 residues: MFIIAIGDVHVPHRSYGIPPEFKKLLVPEKIQHILCTGNLVSKEIHDYFKVLTSDVHIVRGDLDENTSYPDTKIVSIGQFKFGLCHGHQIVPWGDRASLAALQRQLDVDVLISGHTHVLEVFESNGKLFVNPGSATGAFSNISNDVIPSFVLMDVQSNNITVYIYKLIDGQVKVEKIDHVKQQ.

7 residues coordinate Zn(2+): D8, H10, N39, D62, H86, H115, and H117.

It belongs to the VPS29 family. Component of a retromer subcomplex consisting of vps29, vps26 and vps35. Zn(2+) is required as a cofactor.

Its subcellular location is the membrane. The protein resides in the endosome membrane. It carries out the reaction O-phospho-L-serine + H2O = L-serine + phosphate. The enzyme catalyses O-phospho-D-serine + H2O = D-serine + phosphate. Plays a role in vesicular protein sorting. Component of the membrane-associated retromer complex which is essential in endosome-to-Golgi retrograde transport. The vps29-vps26-vps35 subcomplex may be involved in cargo selection. The sequence is that of Vacuolar protein sorting-associated protein 29 (vps29) from Dictyostelium discoideum (Social amoeba).